Here is a 120-residue protein sequence, read N- to C-terminus: ATP-dependent Clp protease adapter protein ClpS (120 aa).

The segment at 9–32 (LTFNQDHPAEHEDDSSGIAVQESK) is disordered.

The protein belongs to the ClpS family. Binds to the N-terminal domain of the chaperone ClpA.

In terms of biological role, involved in the modulation of the specificity of the ClpAP-mediated ATP-dependent protein degradation. The chain is ATP-dependent Clp protease adapter protein ClpS from Ectopseudomonas mendocina (strain ymp) (Pseudomonas mendocina).